A 219-amino-acid polypeptide reads, in one-letter code: Mitochondrial fission factor homolog A (219 aa).

At 1–199 (MAEINRMQYE…ENKERVKHEM (199 aa)) the chain is on the cytoplasmic side. A coiled-coil region spans residues 164–194 (DLALADAASLRRQIIKLNRRLLLLEEENKER). The chain crosses the membrane as a helical; Anchor for type IV membrane protein span at residues 200–217 (TMYSIIIIFGLLNSWLWL). Residues 218-219 (RR) lie on the Extracellular side of the membrane.

Belongs to the Tango11 family.

The protein localises to the mitochondrion outer membrane. It is found in the peroxisome. Its subcellular location is the cytoplasmic vesicle. It localises to the secretory vesicle. The protein resides in the synaptic vesicle. In terms of biological role, plays a role in mitochondrial and peroxisomal fission. Promotes the recruitment and association of the fission mediator dynamin-related protein 1 (DNM1L) to the mitochondrial surface. The chain is Mitochondrial fission factor homolog A (mff-a) from Xenopus laevis (African clawed frog).